The chain runs to 294 residues: RAB7A-interacting MON1-CCZ1 complex subunit 1 (294 aa).

An N-acetylalanine modification is found at A2.

It belongs to the RIMOC1 family. In terms of assembly, interacts with the MON1A-CCZ1B complex. Interacts with GDP-bound RAB7A and promotes its interaction with the MON1A-CCZ1B complex.

The protein localises to the cytoplasm. The protein resides in the cytosol. Functionally, plays an important role in the removal of damaged mitochondria via mitophagy by controlling the stability and localization of RAB7A. Required for the recruitment of RAB7A and ATG9A vesicles to damaged mitochondria and promotes the stability of RAB7A by inhibiting its proteasomal degradation during mitophagy. The sequence is that of RAB7A-interacting MON1-CCZ1 complex subunit 1 from Mus musculus (Mouse).